Reading from the N-terminus, the 432-residue chain is Serine--tRNA ligase (432 aa).

238-240 (TAE) is an L-serine binding site. 269 to 271 (RSE) provides a ligand contact to ATP. Residue glutamate 292 participates in L-serine binding. 356–359 (EVSS) provides a ligand contact to ATP. Residue serine 392 coordinates L-serine.

Belongs to the class-II aminoacyl-tRNA synthetase family. Type-1 seryl-tRNA synthetase subfamily. In terms of assembly, homodimer. The tRNA molecule binds across the dimer.

The protein localises to the cytoplasm. The catalysed reaction is tRNA(Ser) + L-serine + ATP = L-seryl-tRNA(Ser) + AMP + diphosphate + H(+). It catalyses the reaction tRNA(Sec) + L-serine + ATP = L-seryl-tRNA(Sec) + AMP + diphosphate + H(+). It participates in aminoacyl-tRNA biosynthesis; selenocysteinyl-tRNA(Sec) biosynthesis; L-seryl-tRNA(Sec) from L-serine and tRNA(Sec): step 1/1. Catalyzes the attachment of serine to tRNA(Ser). Is also able to aminoacylate tRNA(Sec) with serine, to form the misacylated tRNA L-seryl-tRNA(Sec), which will be further converted into selenocysteinyl-tRNA(Sec). This is Serine--tRNA ligase from Buchnera aphidicola subsp. Baizongia pistaciae (strain Bp).